The chain runs to 473 residues: Aspartyl/glutamyl-tRNA(Asn/Gln) amidotransferase subunit B (473 aa).

The protein belongs to the GatB/GatE family. GatB subfamily. Heterotrimer of A, B and C subunits.

The enzyme catalyses L-glutamyl-tRNA(Gln) + L-glutamine + ATP + H2O = L-glutaminyl-tRNA(Gln) + L-glutamate + ADP + phosphate + H(+). It catalyses the reaction L-aspartyl-tRNA(Asn) + L-glutamine + ATP + H2O = L-asparaginyl-tRNA(Asn) + L-glutamate + ADP + phosphate + 2 H(+). Allows the formation of correctly charged Asn-tRNA(Asn) or Gln-tRNA(Gln) through the transamidation of misacylated Asp-tRNA(Asn) or Glu-tRNA(Gln) in organisms which lack either or both of asparaginyl-tRNA or glutaminyl-tRNA synthetases. The reaction takes place in the presence of glutamine and ATP through an activated phospho-Asp-tRNA(Asn) or phospho-Glu-tRNA(Gln). The sequence is that of Aspartyl/glutamyl-tRNA(Asn/Gln) amidotransferase subunit B from Francisella tularensis subsp. novicida (strain U112).